Reading from the N-terminus, the 141-residue chain is Probable trafficking protein particle complex subunit 2 (141 aa).

This sequence belongs to the TRAPP small subunits family. Sedlin subfamily. Part of the multisubunit TRAPP (transport protein particle) complex.

It localises to the cytoplasm. The protein resides in the perinuclear region. It is found in the endoplasmic reticulum. Its subcellular location is the golgi apparatus. In terms of biological role, may play a role in vesicular transport from endoplasmic reticulum to Golgi. Required for the systemic spread of the RNAi response. The protein is Probable trafficking protein particle complex subunit 2 (sedl-1) of Caenorhabditis elegans.